The primary structure comprises 3010 residues: Genome polyprotein (3010 aa).

Residue serine 2 is modified to N-acetylserine; by host. An interaction with STAT1 region spans residues 2 to 23 (STNGKPQRKTKRNTNRRPQDVK). Residues 2–58 (STNGKPQRKTKRNTNRRPQDVKFPGGGQIVGGVYLLPRRGPRLGVRATRKTWERSQP) are interaction with EIF2AK2/PKR. The segment at 2 to 59 (STNGKPQRKTKRNTNRRPQDVKFPGGGQIVGGVYLLPRRGPRLGVRATRKTWERSQPR) is interaction with DDX3X. The interval 2 to 75 (STNGKPQRKT…PKARQPEGRA (74 aa)) is disordered. Residues 2–168 (STNGKPQRKT…EDGVNYATGN (167 aa)) are Cytoplasmic-facing. 4 short sequence motifs (nuclear localization signal) span residues 5-13 (GKPQRKTKR), 38-43 (PRRGPR), 58-64 (PRGRRQP), and 66-71 (PKARQP). Residues 7-16 (PQRKTKRNTN) are compositionally biased toward basic residues. Serine 99 is subject to Phosphoserine; by host. The interval 112-152 (PRRRSRNLGKVIDTLTCGFADLMGYIPLVGAPLGGVARALA) is important for endoplasmic reticulum and mitochondrial localization. A Phosphoserine; by host PKA modification is found at serine 116. The segment at 122–173 (VIDTLTCGFADLMGYIPLVGAPLGGVARALAHGVRVLEDGVNYATGNLPGCS) is interaction with APOA2. The interval 164-167 (YATG) is important for lipid droplets localization. A helical transmembrane segment spans residues 169–189 (LPGCSFSIFLLALLSCLTIPA). Residues 178-191 (LLALLSCLTIPASA) constitute a propeptide, ER anchor for the core protein, removed in mature form by host signal peptidase. At 190 to 358 (SAYEVHNVSG…GGAHWGVLAG (169 aa)) the chain is on the lumenal side. Residues asparagine 196, asparagine 209, asparagine 234, and asparagine 250 are each glycosylated (N-linked (GlcNAc...) asparagine; by host). Residues 265–296 (LVGAAAFCSAMYVGDLCGSVFLVSQLFTFSPR) are important for fusion. N-linked (GlcNAc...) asparagine; by host glycosylation is present at asparagine 305. A helical membrane pass occupies residues 359–379 (LAYYSMVGNWAKVLIVMLLFA). Residues 380–725 (GVDGSTIVSG…WEYILLLFLL (346 aa)) are Lumenal-facing. The interval 385–411 (TIVSGGTVARTTHSLASLFTQGASQKI) is HVR1. Asparagine 417, asparagine 423, asparagine 430, and asparagine 448 each carry an N-linked (GlcNAc...) (high mannose) asparagine; by host glycan. 4 disulfides stabilise this stretch: cysteine 429–cysteine 552, cysteine 452–cysteine 459, cysteine 486–cysteine 494, and cysteine 503–cysteine 508. Residues 474 to 479 (YTEADI) form an HVR2 region. The segment at 480–493 (QDQRPYCWHYAPRP) is CD81-binding 1. A glycan (N-linked (GlcNAc...) (high mannose) asparagine; by host) is linked at asparagine 532. N-linked (GlcNAc...) asparagine; by host glycosylation is present at asparagine 540. The interval 544–551 (PPQGNWFG) is CD81-binding 2. An N-linked (GlcNAc...) (high mannose) asparagine; by host glycan is attached at asparagine 556. Cysteines 564 and 569 form a disulfide. N-linked (GlcNAc...) (high mannose) asparagine; by host glycosylation is present at asparagine 576. 3 cysteine pairs are disulfide-bonded: cysteine 581-cysteine 585, cysteine 597-cysteine 620, and cysteine 607-cysteine 644. 2 N-linked (GlcNAc...) (high mannose) asparagine; by host glycosylation sites follow: asparagine 623 and asparagine 645. Residues cysteine 652 and cysteine 677 are joined by a disulfide bond. The segment at 660–671 (SELSPLLLSTTE) is PKR/eIF2-alpha phosphorylation homology domain (PePHD). The chain crosses the membrane as a helical span at residues 726-746 (LADARVCACLWMMLLIAQAEA). Topologically, residues 747-757 (ALENLVVFNAA) are lumenal. A helical membrane pass occupies residues 758 to 778 (SVAGMHGTLSFLVFFCAAWYI). The Cytoplasmic portion of the chain corresponds to 779–781 (KGR). Residues 782–803 (LVPGAAYALYGVWPLLLLLLAL) traverse the membrane as a helical segment. The Lumenal segment spans residues 804–813 (PPRAYAMDRE). The chain crosses the membrane as a helical span at residues 814–834 (MAASCGGAVFVGLVLLTLSPH). At 835–838 (YKMF) the chain is on the cytoplasmic side. Residues 839 to 859 (LARLIWWLQYFITRAEAHLQV) form a helical membrane-spanning segment. Residues 860–881 (WIPPLNVRGGRDAIILLTCAAY) are Lumenal-facing. Residues 882–902 (PELIFDITKILLAILGPLMVL) form a helical membrane-spanning segment. In terms of domain architecture, Peptidase C18 spans 903–1026 (QAGLTRIPYF…SLEGRGWRLL (124 aa)). Residues 903-1657 (QAGLTRIPYF…CMSADLEVVT (755 aa)) are Cytoplasmic-facing. The tract at residues 904 to 1206 (AGLTRIPYFV…PVESMETTMR (303 aa)) is protease NS2-3. The S-palmitoyl cysteine; by host moiety is linked to residue cysteine 922. Residues 929 to 949 (AGGHYVQMALMKLAALTGTYV) are interaction with host SCPS1. Residues histidine 952, glutamate 972, and cysteine 993 each act as for protease NS2 activity; shared with dimeric partner in the active site. One can recognise a Peptidase S29 domain in the interval 1027-1208 (APITAYAQQT…ESMETTMRSP (182 aa)). Residues histidine 1083 and aspartate 1107 each act as charge relay system; for serine protease NS3 activity in the active site. Residues cysteine 1123 and cysteine 1125 each contribute to the Zn(2+) site. The Charge relay system; for serine protease NS3 activity role is filled by serine 1165. Residues cysteine 1171 and histidine 1175 each contribute to the Zn(2+) site. The Helicase ATP-binding domain occupies 1217–1369 (PAVPQAFQVA…PNIEEIALSN (153 aa)). 1230–1237 (APTGSGKS) is an ATP binding site. Residues serine 1237 and glutamate 1317 each coordinate Mg(2+). The DECH box motif lies at 1316-1319 (DECH). Positions 1486–1497 (QRRGRTSRGRRG) are RNA-binding. Residues 1658–1678 (STWVLVGGVLAALAAYCLTTG) traverse the membrane as a helical segment. Residues 1679 to 1690 (SVVIVGRIILSG) are NS3-binding. Residues 1679–1805 (SVVIVGRIIL…SITSPLTTQS (127 aa)) are Cytoplasmic-facing. A helical membrane pass occupies residues 1806–1824 (TLLFNILGGWVAAQLAPPG). Topologically, residues 1825 to 1828 (AASA) are lumenal. Residues 1829 to 1849 (FVGAGIAGAAVGSIGLGKVLV) traverse the membrane as a helical segment. Position 1850 (aspartate 1850) is a topological domain, cytoplasmic. The helical transmembrane segment at 1851 to 1871 (MVAGYGAGVAGALVAFKVMSG) threads the bilayer. Topologically, residues 1872-1881 (EMPSTEDLVN) are lumenal. The helical transmembrane segment at 1882 to 1902 (LLPAILSPGALVVGVVCAAIL) threads the bilayer. Residues 1903-1972 (RRHVDPGEGA…WINEDCSTPC (70 aa)) lie on the Cytoplasmic side of the membrane. S-palmitoyl cysteine; by host attachment occurs at residues cysteine 1968 and cysteine 1972. Residues 1973-2002 (SGSWLRDVWDWICTVLADFKTWLQSKLLPR) lie within the membrane without spanning it. At 2003–2989 (LPGVPFFSCQ…YHSLSRARPR (987 aa)) the chain is on the cytoplasmic side. Zn(2+) is bound by residues cysteine 2011, cysteine 2029, cysteine 2031, and cysteine 2052. Residues 2120–2208 (EFFTEVDGVR…ASSSASQLSA (89 aa)) form an FKBP8-binding region. Residues 2120 to 2332 (EFFTEVDGVR…PIPPPRRKRT (213 aa)) form a transcriptional activation region. Positions 2135-2139 (PACKP) are interaction with non-structural protein 4A. Positions 2189–2441 (RLARGSPPSL…PCAAEESKLP (253 aa)) are interaction with host SKP2. Position 2194 is a phosphoserine; by host; in p56 (serine 2194). 5 positions are modified to phosphoserine; by host; in p58: serine 2197, serine 2201, serine 2204, serine 2207, and serine 2210. The ISDR stretch occupies residues 2210-2249 (SLKAACTTRHTPPDADLIEANLLWRQEMGGNITRVESENK). The interaction with EIF2AK2/PKR stretch occupies residues 2210–2275 (SLKAACTTRH…REVSVPAEIL (66 aa)). The interval 2249–2306 (KVVILDSFDPLRAEEDEREVSVPAEILRKSRKFPPALPVWARPDYNPPLLEPWKDPDY) is NS4B-binding. The SH3-binding motif lies at 2322-2325 (PPIP). The short motif at 2326–2334 (PPRRKRTVV) is the Nuclear localization signal element. Lysine 2350 participates in a covalent cross-link: Glycyl lysine isopeptide (Lys-Gly) (interchain with G-Cter in ubiquitin). Residues 2351–2367 (TFGSSESSAAGSGTATA) are compositionally biased toward low complexity. The segment at 2351-2409 (TFGSSESSAAGSGTATAPPDQPSDDGDAGSDVESCSSMPPLEGEPGDPDLSDGSWSTVS) is disordered. Positions 2354-2377 (SSESSAAGSGTATAPPDQPSDDGD) are V3. Phosphoserine; by host occurs at positions 2448 and 2461. One can recognise a RdRp catalytic domain in the interval 2633-2751 (PMGFSYDTRC…ICESAGTQED (119 aa)). 3 residues coordinate Mg(2+): aspartate 2639, aspartate 2737, and aspartate 2738. Residues 2990–3010 (WFMLCLLLLSVGVGIYLLPNR) form a helical membrane-spanning segment.

This sequence belongs to the hepacivirus polyprotein family. Homooligomer. Interacts with E1 (via C-terminus). Interacts with the non-structural protein 5A. Interacts (via N-terminus) with host STAT1 (via SH2 domain); this interaction results in decreased STAT1 phosphorylation and ubiquitin-mediated proteasome-dependent STAT1 degradation, leading to decreased IFN-stimulated gene transcription. Interacts with host STAT3; this interaction constitutively activates STAT3. Interacts with host LTBR receptor. Interacts with host TNFRSF1A receptor and possibly induces apoptosis. Interacts with host HNRPK. Interacts with host YWHAE. Interacts with host UBE3A/E6AP. Interacts with host DDX3X. Interacts with host APOA2. Interacts with host RXRA protein. Interacts with host SP110 isoform 3/Sp110b; this interaction sequesters the transcriptional corepressor SP110 away from the nucleus. Interacts with host CREB3 nuclear transcription protein; this interaction triggers cell transformation. Interacts with host ACY3. Interacts with host C1QR1. Interacts with host RBM24; this interaction, which enhances the interaction of the mature core protein with 5'-UTR, may inhibit viral translation and favor replication. Interacts with host EIF2AK2/PKR; this interaction induces the autophosphorylation of EIF2AK2. Part of the viral assembly initiation complex composed of NS2, E1, E2, NS3, NS4A, NS5A and the mature core protein. As to quaternary structure, forms a heterodimer with envelope glycoprotein E2. Interacts with mature core protein. Interacts with protease NS2. The heterodimer E1/E2 interacts with host CLDN1; this interaction plays a role in viral entry into host cell. Interacts with host SPSB2 (via C-terminus). Part of the viral assembly initiation complex composed of NS2, E1, E2, NS3, NS4A, NS5A and the mature core protein. Interacts with host NEURL3; this interaction prevents E1 binding to glycoprotein E2. In terms of assembly, forms a heterodimer with envelope glycoprotein E1. Interacts with host CD81 and SCARB1 receptors; these interactions play a role in viral entry into host cell. Interacts with host EIF2AK2/PKR; this interaction inhibits EIF2AK2 and probably allows the virus to evade the innate immune response. Interacts with host CD209/DC-SIGN and CLEC4M/DC-SIGNR. Interact with host SPCS1; this interaction is essential for viral particle assembly. Interacts with protease NS2. The heterodimer E1/E2 interacts with host CLDN1; this interaction plays a role in viral entry into host cell. Part of the viral assembly initiation complex composed of NS2, E1, E2, NS3, NS4A, NS5A and the mature core protein. Interacts with host SLC3A2/4F2hc; the interaction may facilitate viral entry into host cell. Interacts with human PLSCR1. Homohexamer. Homoheptamer. Interacts with protease NS2. As to quaternary structure, homodimer. Interacts with host SPCS1; this interaction is essential for viral particle assembly. Interacts with envelope glycoprotein E1. Interacts with envelope glycoprotein E2. Interacts with viroporin p7. Interacts with serine protease/helicase NS3. Part of the replication complex composed of NS2, NS3, NS4A, NS4B, NS5A and the RNA-directed RNA polymerase embedded in an ER-derived membranous web. Part of the viral assembly initiation complex composed of NS2, E1, E2, NS3, NS4A, NS5A and the mature core protein. In terms of assembly, interacts with protease NS2. Interacts with non-structural protein 4A; this interaction stabilizes the folding of NS3 serine protease. NS3-NS4A interaction is essential for NS3 activation and allows membrane anchorage of the latter. NS3/NS4A complex also prevents phosphorylation of host IRF3, thus preventing the establishment of dsRNA induced antiviral state. Interacts with host MAVS; this interaction leads to the cleavage and inhibition of host MAVS. Interacts with host TICAM1; this interaction leads to the cleavage and inhibition of host TICAM1. Interacts with host TANK-binding kinase/TBK1; this interaction results in the inhibition of the association between TBK1 and IRF3, which leads to the inhibition of IRF3 activation. Interacts with host RBM24. Part of the replication complex composed of NS2, NS3, NS4A, NS4B, NS5A and the RNA-directed RNA polymerase embedded in an ER-derived membranous web. Part of the viral assembly initiation complex composed of NS2, E1, E2, NS3, NS4A, NS5A and the mature core protein. Interacts with NS3 serine protease; this interaction stabilizes the folding of NS3 serine protease. NS3-NS4A interaction is essential for NS3 activation and allows membrane anchorage of the latter. Interacts with non-structural protein 5A (via N-terminus). Part of the replication complex composed of NS2, NS3, NS4A, NS4B, NS5A and the RNA-directed RNA polymerase embedded in an ER-derived membranous web. Part of the viral assembly initiation complex composed of NS2, E1, E2, NS3, NS4A, NS5A and the mature core protein. As to quaternary structure, homomultimer. Interacts with non-structural protein NS5A. Interacts with host PLA2G4C; this interaction likely initiates the recruitment of replication complexes to lipid droplets. Interacts with host STING; this interaction disrupts the interaction between STING and TBK1 thereby suppressing the interferon signaling. Part of the replication complex composed of NS2, NS3, NS4A, NS4B, NS5A and the RNA-directed RNA polymerase embedded in an ER-derived membranous web. In terms of assembly, monomer. Homodimer; dimerization is required for RNA-binding. Interacts with the mature core protein. Interacts (via N-terminus) with non-structural protein 4A. Interacts with non-structural protein 4B. Interacts (via region D2) with RNA-directed RNA polymerase. Part of the viral assembly initiation complex composed of NS2, E1, E2, NS3, NS4A, NS5A and the mature core protein. Part of the replication complex composed of NS2, NS3, NS4A, NS4B, NS5A and the RNA-directed RNA polymerase embedded in an ER-derived membranous web. Interacts with host GRB2. Interacts with host BIN1. Interacts with host PIK3R1. Interacts with host SRCAP. Interacts with host FKBP8. Interacts (via C-terminus) with host VAPB (via MSP domain). Interacts with host EIF2AK2/PKR; this interaction leads to disruption of EIF2AK2 dimerization by NS5A and probably allows the virus to evade the innate immune response. Interacts (via N-terminus) with host PACSIN2 (via N-terminus); this interaction attenuates protein kinase C alpha-mediated phosphorylation of PACSIN2 by disrupting the interaction between PACSIN2 and PRKCA. Interacts (via N-terminus) with host SRC kinase (via SH2 domain). Interacts with most Src-family kinases. Interacts with host IFI27 and SKP2; promotes the ubiquitin-mediated proteasomal degradation of NS5A. Interacts with host GPS2. Interacts with host TNFRSF21; this interaction allows the modulation by the virus of JNK, p38 MAPK, STAT3, and Akt signaling pathways in a DR6-dependent manner. Interacts (via N-terminus) with host CIDEB (via N-terminus); this interaction seems to regulate the association of HCV particles with APOE. Interacts with host CHKA/Choline Kinase-alpha; CHKA bridges host PI4KA and NS5A and potentiates NS5A-stimulated PI4KA activity, which then facilitates the targeting of the ternary complex to the ER for viral replication. Interacts with host SPSB2 (via C-terminus); this interaction targets NS5A for ubiquitination and degradation. Interacts with host RAB18; this interaction may promote the association of NS5A and other replicase components with lipid droplets. Interacts (via region D2) with host PPIA/CYPA; the interaction stimulates RNA-binding ability of NS5A and is dependent on the peptidyl-prolyl cis-trans isomerase activity of PPIA/CYPA. Interacts with host TRIM14; this interaction induces the degradation of NS5A. Homooligomer. Interacts with non-structural protein 5A. Interacts with host VAPB. Interacts with host PRK2/PKN2. Interacts with host HNRNPA1 and SEPT6; these interactions facilitate viral replication. Part of the replication complex composed of NS2, NS3, NS4A, NS4B, NS5A and the RNA-directed RNA polymerase. The cofactor is Zn(2+). Requires Mg(2+) as cofactor. Specific enzymatic cleavages in vivo yield mature proteins. The structural proteins, core, E1, E2 and p7 are produced by proteolytic processing by host signal peptidases. The core protein precursor is synthesized as a 23 kDa, which is retained in the ER membrane through the hydrophobic signal peptide. Cleavage by the signal peptidase releases the 21 kDa mature core protein. The cleavage of the core protein precursor occurs between aminoacids 176 and 188 but the exact cleavage site is not known. Some degraded forms of the core protein appear as well during the course of infection. The other proteins (p7, NS2, NS3, NS4A, NS4B, NS5A and NS5B) are cleaved by the viral proteases. Autoprocessing between NS2 and NS3 is mediated by the NS2 cysteine protease catalytic domain and regulated by the NS3 N-terminal domain. Post-translationally, phosphorylated by host PKC and PKA. In terms of processing, ubiquitinated; mediated by UBE3A and leading to core protein subsequent proteasomal degradation. Highly N-glycosylated. Post-translationally, palmitoylation is required for NS2/3 autoprocessing and E2 recruitment to membranes. In terms of processing, palmitoylated. This modification may play a role in its polymerization or in protein-protein interactions. Phosphorylated on serines in a basal form termed p56. p58 is a hyperphosphorylated form of p56. p56 and p58 coexist in the cell in roughly equivalent amounts. Hyperphosphorylation is dependent on the presence of NS4A. Host CSNK1A1/CKI-alpha or RPS6KB1 kinases may be responsible for NS5A phosphorylation. Post-translationally, tyrosine phosphorylation is essential for the interaction with host SRC. In terms of processing, the N-terminus is phosphorylated by host PRK2/PKN2. Ubiquitinated. Ubiquitination, most probably at Lys-2350, mediated by host IFI27 and SKP2 leads to proteasomal degradation, restricting viral infection. Ubiquitination by host TRIM22 leads to interruption of viral replication.

Its subcellular location is the host endoplasmic reticulum membrane. The protein localises to the host mitochondrion membrane. It localises to the virion. The protein resides in the host cytoplasm. It is found in the host nucleus. Its subcellular location is the host lipid droplet. The protein localises to the virion membrane. It localises to the host mitochondrion. The protein resides in the host cell membrane. It is found in the host perinuclear region. It catalyses the reaction Hydrolysis of four peptide bonds in the viral precursor polyprotein, commonly with Asp or Glu in the P6 position, Cys or Thr in P1 and Ser or Ala in P1'.. The catalysed reaction is a ribonucleoside 5'-triphosphate + H2O = a ribonucleoside 5'-diphosphate + phosphate + H(+). The enzyme catalyses ATP + H2O = ADP + phosphate + H(+). It carries out the reaction RNA(n) + a ribonucleoside 5'-triphosphate = RNA(n+1) + diphosphate. Its activity is regulated as follows. Inhibited by the antiviral drug hexamethylene amiloride. Inhibition by amantadine appears to be genotype-dependent. Also inhibited by long-alkyl-chain iminosugar derivatives. Activity is up-regulated by PRK2/PKN2-mediated phosphorylation. In terms of biological role, packages viral RNA to form a viral nucleocapsid, and promotes virion budding. Participates in the viral particle production as a result of its interaction with the non-structural protein 5A. Binds RNA and may function as a RNA chaperone to induce the RNA structural rearrangements taking place during virus replication. Modulates viral translation initiation by interacting with viral IRES and 40S ribosomal subunit. Affects various cell signaling pathways, host immunity and lipid metabolism. Prevents the establishment of cellular antiviral state by blocking the interferon-alpha/beta (IFN-alpha/beta) and IFN-gamma signaling pathways and by blocking the formation of phosphorylated STAT1 and promoting ubiquitin-mediated proteasome-dependent degradation of STAT1. Activates STAT3 leading to cellular transformation. Regulates the activity of cellular genes, including c-myc and c-fos. May repress the promoter of p53, and sequester CREB3 and SP110 isoform 3/Sp110b in the cytoplasm. Represses cell cycle negative regulating factor CDKN1A, thereby interrupting an important check point of normal cell cycle regulation. Targets transcription factors involved in the regulation of inflammatory responses and in the immune response: suppresses TNF-induced NF-kappa-B activation, and activates AP-1. Binds to dendritic cells (DCs) via C1QR1, resulting in down-regulation of T-lymphocytes proliferation. Alters lipid metabolism by interacting with hepatocellular proteins involved in lipid accumulation and storage. Induces up-regulation of FAS promoter activity, and thereby contributes to the increased triglyceride accumulation in hepatocytes (steatosis). Its function is as follows. Forms a heterodimer with envelope glycoprotein E2, which mediates virus attachment to the host cell, virion internalization through clathrin-dependent endocytosis and fusion with host membrane. Fusion with the host cell is most likely mediated by both E1 and E2, through conformational rearrangements of the heterodimer required for fusion rather than a classical class II fusion mechanism. E1/E2 heterodimer binds host apolipoproteins such as APOB and ApoE thereby forming a lipo-viro-particle (LVP). APOE associated to the LVP allows the initial virus attachment to cell surface receptors such as the heparan sulfate proteoglycans (HSPGs), syndecan-1 (SDC1), syndecan-1 (SDC2), the low-density lipoprotein receptor (LDLR) and scavenger receptor class B type I (SCARB1). The cholesterol transfer activity of SCARB1 allows E2 exposure and binding of E2 to SCARB1 and the tetraspanin CD81. E1/E2 heterodimer binding on CD81 activates the epithelial growth factor receptor (EGFR) signaling pathway. Diffusion of the complex E1-E2-EGFR-SCARB1-CD81 to the cell lateral membrane allows further interaction with Claudin 1 (CLDN1) and occludin (OCLN) to finally trigger HCV entry. Functionally, forms a heterodimer with envelope glycoprotein E1, which mediates virus attachment to the host cell, virion internalization through clathrin-dependent endocytosis and fusion with host membrane. Fusion with the host cell is most likely mediated by both E1 and E2, through conformational rearrangements of the heterodimer required for fusion rather than a classical class II fusion mechanism. The interaction between envelope glycoprotein E2 and host apolipoprotein E/APOE allows the proper assembly, maturation and infectivity of the viral particles. This interaction is probably promoted via the up-regulation of cellular autophagy by the virus. E1/E2 heterodimer binds host apolipoproteins such as APOB and APOE thereby forming a lipo-viro-particle (LVP). APOE associated to the LVP allows the initial virus attachment to cell surface receptors such as the heparan sulfate proteoglycans (HSPGs), syndecan-1 (SDC1), syndecan-1 (SDC2), the low-density lipoprotein receptor (LDLR) and scavenger receptor class B type I (SCARB1). The cholesterol transfer activity of SCARB1 allows E2 exposure and binding of E2 to SCARB1 and the tetraspanin CD81. E1/E2 heterodimer binding on CD81 activates the epithelial growth factor receptor (EGFR) signaling pathway. Diffusion of the complex E1-E2-EGFR-SCARB1-CD81 to the cell lateral membrane allows further interaction with Claudin 1 (CLDN1) and occludin (OCLN) to finally trigger HCV entry. Inhibits host EIF2AK2/PKR activation, preventing the establishment of an antiviral state. Viral ligand for CD209/DC-SIGN and CLEC4M/DC-SIGNR, which are respectively found on dendritic cells (DCs), and on liver sinusoidal endothelial cells and macrophage-like cells of lymph node sinuses. These interactions allow the capture of circulating HCV particles by these cells and subsequent facilitated transmission to permissive cells such as hepatocytes and lymphocyte subpopulations. The interaction between E2 and host amino acid transporter complex formed by SLC3A2 and SLC7A5/LAT1 may facilitate viral entry into host cell. Ion channel protein that acts as a viroporin and plays an essential role in the assembly, envelopment and secretion of viral particles. Regulates the host cell secretory pathway, which induces the intracellular retention of viral glycoproteins and favors assembly of viral particles. Creates a pore in acidic organelles and releases Ca(2+) and H(+) in the cytoplasm of infected cells, leading to a productive viral infection. High levels of cytoplasmic Ca(2+) may trigger membrane trafficking and transport of viral ER-associated proteins to viroplasms, sites of viral genome replication. This ionic imbalance induces the assembly of the inflammasome complex, which triggers the maturation of pro-IL-1beta into IL-1beta through the action of caspase-1. Targets also host mitochondria and induces mitochondrial depolarization. In addition of its role as a viroporin, acts as a lipid raft adhesion factor. In terms of biological role, cysteine protease required for the proteolytic auto-cleavage between the non-structural proteins NS2 and NS3. The N-terminus of NS3 is required for the function of NS2 protease (active region NS2-3). Promotes the initiation of viral particle assembly by mediating the interaction between structural and non-structural proteins. Its function is as follows. Displays three enzymatic activities: serine protease with a chymotrypsin-like fold, NTPase and RNA helicase. NS3 serine protease, in association with NS4A, is responsible for the cleavages of NS3-NS4A, NS4A-NS4B, NS4B-NS5A and NS5A-NS5B. The NS3/NS4A complex prevents phosphorylation of host IRF3, thus preventing the establishment of dsRNA induced antiviral state. The NS3/NS4A complex induces host amino acid transporter component SLC3A2, thus contributing to HCV propagation. NS3 RNA helicase binds to RNA and unwinds both dsDNA and dsRNA in the 3' to 5' direction, and likely resolves RNA complicated stable secondary structures in the template strand. Binds a single ATP and catalyzes the unzipping of a single base pair of dsRNA. Inhibits host antiviral proteins TBK1 and IRF3 thereby preventing the establishment of an antiviral state. Cleaves host MAVS/CARDIF thereby preventing the establishment of an antiviral state. Cleaves host TICAM1/TRIF, thereby disrupting TLR3 signaling and preventing the establishment of an antiviral state. Functionally, peptide cofactor which forms a non-covalent complex with the N-terminal of NS3 serine protease. The NS3/NS4A complex prevents phosphorylation of host IRF3, thus preventing the establishment of dsRNA induced antiviral state. The NS3/NS4A complex induces host amino acid transporter component SLC3A2, thus contributing to HCV propagation. Induces a specific membrane alteration that serves as a scaffold for the virus replication complex. This membrane alteration gives rise to the so-called ER-derived membranous web that contains the replication complex. NS4B self-interaction contributes to its function in membranous web formation. Promotes host TRIF protein degradation in a CASP8-dependent manner thereby inhibiting host TLR3-mediated interferon signaling. Disrupts the interaction between STING and TBK1 contributing to the inhibition of interferon signaling. In terms of biological role, phosphorylated protein that is indispensable for viral replication and assembly. Both hypo- and hyperphosphorylated states are required for the viral life cycle. The hyperphosphorylated form of NS5A is an inhibitor of viral replication. Involved in RNA-binding and especially in binding to the viral genome. Zinc is essential for RNA-binding. Participates in the viral particle production as a result of its interaction with the mature viral core protein. Its interaction with host VAPB may target the viral replication complex to vesicles. Down-regulates viral IRES translation initiation. Mediates interferon resistance, presumably by interacting with and inhibiting host EIF2AK2/PKR. Prevents BIN1-induced apoptosis. Acts as a transcriptional activator of some host genes important for viral replication when localized in the nucleus. Via the interaction with host PACSIN2, modulates lipid droplet formation in order to promote virion assembly. Modulates TNFRSF21/DR6 signaling pathway for viral propagation. Its function is as follows. RNA-dependent RNA polymerase that performs primer-template recognition and RNA synthesis during viral replication. Initiates RNA transcription/replication at a flavin adenine dinucleotide (FAD), resulting in a 5'- FAD cap on viral RNAs. In this way, recognition of viral 5' RNA by host pattern recognition receptors can be bypassed, thereby evading activation of antiviral pathways. This is Genome polyprotein from Hepatitis C virus genotype 1b (isolate Taiwan) (HCV).